The primary structure comprises 130 residues: Small ribosomal subunit protein uS11 (130 aa).

The protein belongs to the universal ribosomal protein uS11 family. As to quaternary structure, part of the 30S ribosomal subunit. Interacts with proteins S7 and S18. Binds to IF-3.

Located on the platform of the 30S subunit, it bridges several disparate RNA helices of the 16S rRNA. Forms part of the Shine-Dalgarno cleft in the 70S ribosome. This Campylobacter jejuni subsp. jejuni serotype O:6 (strain 81116 / NCTC 11828) protein is Small ribosomal subunit protein uS11.